Consider the following 119-residue polypeptide: uncharacterized protein (119 aa).

This is an uncharacterized protein from Vaccinia virus (strain Copenhagen) (VACV).